Reading from the N-terminus, the 220-residue chain is Glycerol-3-phosphate acyltransferase (220 aa).

6 helical membrane passes run 11 to 31 (INVI…GYAL), 70 to 90 (LLVL…SKLF), 96 to 116 (LQWM…FLNF), 127 to 147 (GSVV…WFFV), 153 to 173 (ISSL…FFVP), and 193 to 213 (MVLI…NLLA).

It belongs to the PlsY family. As to quaternary structure, probably interacts with PlsX.

It localises to the cell inner membrane. It catalyses the reaction an acyl phosphate + sn-glycerol 3-phosphate = a 1-acyl-sn-glycero-3-phosphate + phosphate. It functions in the pathway lipid metabolism; phospholipid metabolism. Catalyzes the transfer of an acyl group from acyl-phosphate (acyl-PO(4)) to glycerol-3-phosphate (G3P) to form lysophosphatidic acid (LPA). This enzyme utilizes acyl-phosphate as fatty acyl donor, but not acyl-CoA or acyl-ACP. The sequence is that of Glycerol-3-phosphate acyltransferase from Helicobacter pylori (strain ATCC 700392 / 26695) (Campylobacter pylori).